Consider the following 250-residue polypeptide: Peptidyl-tRNA hydrolase (250 aa).

Residue Tyr14 coordinates tRNA. His19 serves as the catalytic Proton acceptor. TRNA contacts are provided by Phe64, Asn66, and Asn112. The tract at residues 192–250 (MGDGNQRPGGVKTDPAQLEKAPPKAQSHIRQARQNQKKPNIPESGPMAEMLKKLLGKKD) is disordered. Positions 219–229 (HIRQARQNQKK) are enriched in polar residues. Residues 241–250 (MLKKLLGKKD) show a composition bias toward basic and acidic residues.

Belongs to the PTH family. As to quaternary structure, monomer.

The protein resides in the cytoplasm. The catalysed reaction is an N-acyl-L-alpha-aminoacyl-tRNA + H2O = an N-acyl-L-amino acid + a tRNA + H(+). In terms of biological role, hydrolyzes ribosome-free peptidyl-tRNAs (with 1 or more amino acids incorporated), which drop off the ribosome during protein synthesis, or as a result of ribosome stalling. Its function is as follows. Catalyzes the release of premature peptidyl moieties from peptidyl-tRNA molecules trapped in stalled 50S ribosomal subunits, and thus maintains levels of free tRNAs and 50S ribosomes. In Brucella canis (strain ATCC 23365 / NCTC 10854 / RM-666), this protein is Peptidyl-tRNA hydrolase.